The sequence spans 292 residues: Keratin-associated protein 10-9 (292 aa).

25 tandem repeats follow at residues 26 to 30, 31 to 35, 36 to 40, 57 to 61, 79 to 83, 99 to 103, 104 to 108, 109 to 113, 114 to 118, 120 to 124, 130 to 134, 140 to 144, 145 to 149, 150 to 154, 162 to 166, 172 to 176, 182 to 186, 187 to 191, 192 to 196, 197 to 201, 209 to 213, 219 to 223, 224 to 228, 243 to 247, and 250 to 254. A 25 X 5 AA repeats of C-C-X(3) region spans residues 26–254; it reads CCEPPCCATS…VPVSSCCAPT (229 aa).

It belongs to the KRTAP type 10 family. As to quaternary structure, interacts with hair keratins. Restricted to a narrow region of the hair fiber cuticle, lying approximately 20 cell layers above the apex of the dermal papilla of the hair root; not detected in any other tissues.

Its function is as follows. In the hair cortex, hair keratin intermediate filaments are embedded in an interfilamentous matrix, consisting of hair keratin-associated proteins (KRTAP), which are essential for the formation of a rigid and resistant hair shaft through their extensive disulfide bond cross-linking with abundant cysteine residues of hair keratins. The matrix proteins include the high-sulfur and high-glycine-tyrosine keratins. This Homo sapiens (Human) protein is Keratin-associated protein 10-9 (KRTAP10-9).